The primary structure comprises 580 residues: Phosphatase and actin regulator 1 (580 aa).

A phosphoserine mark is found at S67 and S78. Phosphothreonine is present on T104. The Nuclear localization signal signature appears at 108–129 (RRRSKFANLGRIFKPWKWRKKK). The stretch at 138-163 (AALERKISMRQSREELIKRGVLKEIY) is one RPEL 1 repeat. Disordered stretches follow at residues 331-355 (EQRVPCSTSYHSSGLHSGDGVTKAG) and 376-410 (KENVPHESDYEDSSCLYTREEEEEEEDEDDDSSLY). Polar residues predominate over residues 335 to 345 (PCSTSYHSSGL). The span at 395–407 (EEEEEEEDEDDDS) shows a compositional bias: acidic residues. RPEL repeat units follow at residues 422–447 (DSLAIKLSNRPSKRELEEKNILPRQT), 460–484 (TKLTRRLSQRPTAEELEQRNILKPR), and 498–523 (RRLTRKLSQRPTVEELRERKILIRFS). Residues 462-494 (LTRRLSQRPTAEELEQRNILKPRNEQEEQEEKR) are disordered. S467 is modified (phosphoserine). The span at 471–494 (TAEELEQRNILKPRNEQEEQEEKR) shows a compositional bias: basic and acidic residues. S505 is modified (phosphoserine).

Belongs to the phosphatase and actin regulator family. Interacts (via RPEL repeats) with ACTA1 and PPP1CA; ACTA1 and PPP1CA compete for the same binding site. Detected in umbilical vein endothelial cells.

Its subcellular location is the cytoplasm. It localises to the synapse. The protein localises to the nucleus. Binds actin monomers (G actin) and plays a role in multiple processes including the regulation of actin cytoskeleton dynamics, actin stress fibers formation, cell motility and survival, formation of tubules by endothelial cells, and regulation of PPP1CA activity. Involved in the regulation of cortical neuron migration and dendrite arborization. This is Phosphatase and actin regulator 1 (PHACTR1) from Homo sapiens (Human).